The sequence spans 267 residues: Mediator of RNA polymerase II transcription subunit 8 (267 aa).

Coiled-coil stretches lie at residues 1-26 (MQREEKQLEACLDALISQVSDIKNSL) and 116-160 (DVEE…EERE). The interval 190–267 (GLSNRRPPGQ…KSASMHPYQR (78 aa)) is disordered. Residues 227-245 (PPNQQQQHMAGVSMSQGSQ) are compositionally biased toward polar residues.

The protein belongs to the Mediator complex subunit 8 family. Component of the Mediator complex. May be part of a multisubunit E3 ubiquitin-protein ligase complex.

It is found in the nucleus. Its pathway is protein modification; protein ubiquitination. Its function is as follows. Component of the Mediator complex, a coactivator involved in the regulated transcription of nearly all RNA polymerase II-dependent genes. Mediator functions as a bridge to convey information from gene-specific regulatory proteins to the basal RNA polymerase II transcription machinery. Mediator is recruited to promoters by direct interactions with regulatory proteins and serves as a scaffold for the assembly of a functional preinitiation complex with RNA polymerase II and the general transcription factors. May play a role as a target recruitment subunit in E3 ubiquitin-protein ligase complexes and thus in ubiquitination and subsequent proteasomal degradation of target proteins. This Xenopus tropicalis (Western clawed frog) protein is Mediator of RNA polymerase II transcription subunit 8 (med8).